The chain runs to 356 residues: 16-methoxy-2,3-dihydro-3-hydroxytabersonine synthase (356 aa).

Residues C49, H71, C102, C105, C108, C116, and C162 each coordinate Zn(2+). Residue 187–192 participates in NAD(+) binding; that stretch reads GLGAVG.

Belongs to the zinc-containing alcohol dehydrogenase family. It depends on Zn(2+) as a cofactor. As to expression, expressed in leaf epidermis.

It carries out the reaction (3R)-3-hydroxy-16-methoxy-2,3-dihydrotabersonine + A = (3R)-1,2-didehydro-3-hydroxy-16-methoxy-2,3-dihydrotabersonine + AH2. The enzyme catalyses (3R)-3-hydroxy-2,3-dihydrotabersonine + A = (3R)-1,2-didehydro-3-hydroxy-2,3-dihydrotabersonine + AH2. It functions in the pathway alkaloid biosynthesis; vindoline biosynthesis. Functionally, converts the unstable imine alcohols produced by CYP71D1V2/T3O into 3-hydroxy-16-methoxy-2,3-dihydrotabersonine or 3-hydroxy-2,3-dihydrotabersonine. The sequence is that of 16-methoxy-2,3-dihydro-3-hydroxytabersonine synthase from Catharanthus roseus (Madagascar periwinkle).